The sequence spans 359 residues: Phospho-N-acetylmuramoyl-pentapeptide-transferase (359 aa).

10 helical membrane passes run 3–23 (QILI…PVLI), 55–75 (VAII…GVLM), 84–104 (GLLV…DDLI), 117–137 (TAKT…ALQF), 156–176 (IATV…VVSA), 190–210 (LAAG…FWQF), 231–251 (LAII…WNAA), 255–275 (IFMG…LSVT), 283–303 (VVLG…ILAF), and 330–350 (VIIR…ALFY).

It belongs to the glycosyltransferase 4 family. MraY subfamily. Mg(2+) serves as cofactor.

It is found in the cell membrane. It carries out the reaction UDP-N-acetyl-alpha-D-muramoyl-L-alanyl-gamma-D-glutamyl-meso-2,6-diaminopimeloyl-D-alanyl-D-alanine + di-trans,octa-cis-undecaprenyl phosphate = di-trans,octa-cis-undecaprenyl diphospho-N-acetyl-alpha-D-muramoyl-L-alanyl-D-glutamyl-meso-2,6-diaminopimeloyl-D-alanyl-D-alanine + UMP. The protein operates within cell wall biogenesis; peptidoglycan biosynthesis. Its function is as follows. Catalyzes the initial step of the lipid cycle reactions in the biosynthesis of the cell wall peptidoglycan: transfers peptidoglycan precursor phospho-MurNAc-pentapeptide from UDP-MurNAc-pentapeptide onto the lipid carrier undecaprenyl phosphate, yielding undecaprenyl-pyrophosphoryl-MurNAc-pentapeptide, known as lipid I. This chain is Phospho-N-acetylmuramoyl-pentapeptide-transferase, found in Mycolicibacterium gilvum (strain PYR-GCK) (Mycobacterium gilvum (strain PYR-GCK)).